An 86-amino-acid polypeptide reads, in one-letter code: MVLSTTVCRRIRRKAPCAFLKRTLKQKKPRLSLEKRCDLLIHLNCLLFVQKLAEESRTNACESKSGVIKKDHVQAAAKVILKKSRG.

Belongs to the CENP-W/WIP1 family. Heterodimer with CENPT; this dimer coassembles with CENPS-CENPX heterodimers at centromeres to form the tetrameric CENP-T-W-S-X complex, which is a subcomplex of the large constitutive centromere-associated network (CCAN, also known as the interphase centromere complex or ICEN). Interacts with NPM1.

It is found in the nucleus. It localises to the chromosome. The protein resides in the centromere. Its subcellular location is the kinetochore. The protein localises to the nucleus matrix. It is found in the nucleolus. Functionally, component of the CENPA-NAC (nucleosome-associated) complex, a complex that plays a central role in assembly of kinetochore proteins, mitotic progression and chromosome segregation. The CENPA-NAC complex recruits the CENPA-CAD (nucleosome distal) complex and may be involved in incorporation of newly synthesized CENPA into centromeres. Part of a nucleosome-associated complex that binds specifically to histone H3-containing nucleosomes at the centromere, as opposed to nucleosomes containing CENPA. Component of the heterotetrameric CENP-T-W-S-X complex that binds and supercoils DNA, and plays an important role in kinetochore assembly. CENPW has a fundamental role in kinetochore assembly and function. It is one of the inner kinetochore proteins, with most further proteins binding downstream. Required for normal chromosome organization and normal progress through mitosis. This Rattus norvegicus (Rat) protein is Centromere protein W (Cenpw).